The primary structure comprises 245 residues: UPF0246 protein Cgl1995/cg2186 (245 aa).

Belongs to the UPF0246 family.

This Corynebacterium glutamicum (strain ATCC 13032 / DSM 20300 / JCM 1318 / BCRC 11384 / CCUG 27702 / LMG 3730 / NBRC 12168 / NCIMB 10025 / NRRL B-2784 / 534) protein is UPF0246 protein Cgl1995/cg2186.